Reading from the N-terminus, the 491-residue chain is Sucrose transport protein SUC7 (491 aa).

The span at 1-13 (MSDLQANKDETTV) shows a compositional bias: basic and acidic residues. The tract at residues 1–25 (MSDLQANKDETTVDRQSSSSVDLDG) is disordered. The Cytoplasmic segment spans residues 1-32 (MSDLQANKDETTVDRQSSSSVDLDGPSPLRKM). Ser17 bears the Phosphoserine mark. A helical membrane pass occupies residues 33-53 (ISVASIAAGIQFGWALQLSLL). The Extracellular portion of the chain corresponds to 54 to 67 (TPYVQLLGVPHKWP). A helical transmembrane segment spans residues 68–88 (SFIWLCGPVSGLLVQPSVGYF). At 89 to 100 (SDRCTSRFGRRR) the chain is on the cytoplasmic side. A helical transmembrane segment spans residues 101–121 (PFIATGALLVAVSVVLIGYAA). Topologically, residues 122–138 (DFGHSMGDKIDKPVKMR) are extracellular. Residues 139–159 (AVVIFALGFWILDVANNTLQG) form a helical membrane-spanning segment. Topologically, residues 160–180 (PCRAFLGDLAAGDAQKTRTAN) are cytoplasmic. The helical transmembrane segment at 181-201 (AFFSFFMAVGNVLGYAAGSYT) threads the bilayer. The Extracellular segment spans residues 202 to 223 (NLYKIFPFTMTKACDIYCANLK). Residues 224-244 (SCFFLSITLLLVVTIIALWYV) form a helical membrane-spanning segment. Residues 245–276 (EDKQWSPKADSDNEKTPFFGEIFGAFKVMKRP) lie on the Cytoplasmic side of the membrane. A helical transmembrane segment spans residues 277-297 (MWMLLIVTALNWIAWFPFLLY). Over 298-323 (DTDWMGREVYGGDSKGDDKMKKLYNQ) the chain is Extracellular. A helical membrane pass occupies residues 324 to 344 (GIHVGALGLMLNSIVLGVMSL). Residues 345 to 358 (GIEGISRKMGGAKR) lie on the Cytoplasmic side of the membrane. The chain crosses the membrane as a helical span at residues 359–379 (LWGAVNIILAVCLAMTVLVTK). Residues 380 to 402 (KAEEHRRIAGPMALPTDGIRAGA) are Extracellular-facing. A helical membrane pass occupies residues 403–423 (LTLFALLGIPLAITFSIPFAL). At 424-443 (ASIISSSSGAGQRLSLGVLN) the chain is on the cytoplasmic side. Residues 444-464 (MAIVIPQMIVSFGVGPIDALF) traverse the membrane as a helical segment. Residues 465–468 (GDGN) are Extracellular-facing. Residues 469 to 489 (LPGFVVGAIAAAVSSIVAFTV) traverse the membrane as a helical segment. Topologically, residues 490–491 (LP) are cytoplasmic.

The protein belongs to the glycoside-pentoside-hexuronide (GPH) cation symporter transporter (TC 2.A.2.4) family. Expressed in anthers.

The protein resides in the cell membrane. It functions in the pathway glycan biosynthesis; sucrose metabolism. In terms of biological role, may be responsible for the transport of glucosides into the cell, with the concomitant uptake of protons (symport system). Does not seem to transport sucrose. The chain is Sucrose transport protein SUC7 from Arabidopsis thaliana (Mouse-ear cress).